The chain runs to 503 residues: Diels-Alderase cghA (503 aa).

It belongs to the Diels-Alderase family.

It catalyses the reaction (2S)-3-[(2S)-3,5-dioxo-4-[(2E,4R,6R,8E,10E,12E)-4,6,12-trimethyltetradeca-2,8,10,12-tetraenoyl]pyrrolidin-2-yl]-2-hydroxy-2-methylpropanoate = sch 210972. It participates in secondary metabolite biosynthesis. Functionally, diels-Alderase; part of the gene cluster that mediates the biosynthesis of the tetramic acid Sch210972, a potential anti-HIV fungal natural product that contains a decalin core. The PKS module of cghG together with the enoylreductase cghC catalyze the formation of the polyketide unit which is then conjugated to 4-hydroxyl-4-methyl glutamate (HMG) by the condensation domain of the cghG NRPS module. One unique structural feature of Sch210972 is the tetramic acid motif proposed to be derived from the non-proteinogenic amino acid HMG, by a Dieckmann-type condensation catalyzed by the reductase domain of cghG. The aldolase cghB catalyzes the aldol condensation of 2 molecules of pyruvic acid to yield the intermediate 4-hydroxyl-4-methyl-2-oxoglutarate (HMOG), which can then be stereoselectively transaminated by an unidentified enzyme to form HMG. The Diels-Alderase cghA then uses the Dieckmann product released by cghG as substrate and catalyzes the Diels-Alder cycloaddition to form the decalin ring of Sch210972. CghA also suppresses the nonenzymatic formation of the alternative stereoisomer. This is Diels-Alderase cghA from Chaetomium globosum (strain ATCC 6205 / CBS 148.51 / DSM 1962 / NBRC 6347 / NRRL 1970) (Soil fungus).